Reading from the N-terminus, the 44-residue chain is Photosystem I reaction center subunit IX (44 aa).

The chain crosses the membrane as a helical span at residues 7 to 27 (YLSVAPVLSTLWFGSLAGLLI).

This sequence belongs to the PsaJ family.

Its subcellular location is the plastid. It is found in the chloroplast thylakoid membrane. In terms of biological role, may help in the organization of the PsaE and PsaF subunits. In Arabis hirsuta (Hairy rock-cress), this protein is Photosystem I reaction center subunit IX.